Reading from the N-terminus, the 670-residue chain is Transcription factor vib-1 (670 aa).

A DNA-binding region (NDT80) is located at residues 106 to 341; the sequence is TEMVQDLRDD…RSPRNFQARK (236 aa). 2 stretches are compositionally biased toward polar residues: residues 394 to 438 and 553 to 568; these read FTSA…TTSM and LGNS…QHHP. Disordered regions lie at residues 394–457 and 496–670; these read FTSA…SYTA and SAPP…WNAT. The segment covering 592 to 605 has biased composition (low complexity); that stretch reads ASAPASAPTSAAPP. The segment covering 611-631 has biased composition (polar residues); that stretch reads PSQSWTSTAGEGQTSSYTNGG.

It is found in the nucleus. The protein resides in the cytoplasm. Transcription factor that acts as a positive regulator of nonrepressible acid phosphatase activity. Is a major regulator of responses to nitrogen and carbon starvation and is essential for the expression of genes involved in vegetative incompatibility (like pin-c, het-6, and tol). Vegetative incompatibility is a non-self-recognition system ubiquitous in filamentous fungi which results in programmed cell death. The chain is Transcription factor vib-1 (vib-1) from Neurospora crassa (strain ATCC 24698 / 74-OR23-1A / CBS 708.71 / DSM 1257 / FGSC 987).